The sequence spans 333 residues: Ornithine carbamoyltransferase (333 aa).

Residues 56–59, Q83, R107, and 134–137 contribute to the carbamoyl phosphate site; these read STRT and HPTQ. Residues N167, D231, and 235 to 236 contribute to the L-ornithine site; that span reads SM. Residues 273 to 274 and R318 contribute to the carbamoyl phosphate site; that span reads CL.

Belongs to the aspartate/ornithine carbamoyltransferase superfamily. OTCase family.

It is found in the cytoplasm. The catalysed reaction is carbamoyl phosphate + L-ornithine = L-citrulline + phosphate + H(+). It functions in the pathway amino-acid biosynthesis; L-arginine biosynthesis; L-arginine from L-ornithine and carbamoyl phosphate: step 1/3. Its function is as follows. Has vitronectin and fibronectin-binding activity. Reversibly catalyzes the transfer of the carbamoyl group from carbamoyl phosphate (CP) to the N(epsilon) atom of ornithine (ORN) to produce L-citrulline. This Staphylococcus epidermidis (strain ATCC 12228 / FDA PCI 1200) protein is Ornithine carbamoyltransferase (argF).